The sequence spans 31 residues: MLTITSFFGFLLAALTITSVLFIGLTKIRLI.

A helical transmembrane segment spans residues 4–24 (ITSFFGFLLAALTITSVLFIG).

The protein belongs to the PetL family. As to quaternary structure, the 4 large subunits of the cytochrome b6-f complex are cytochrome b6, subunit IV (17 kDa polypeptide, PetD), cytochrome f and the Rieske protein, while the 4 small subunits are PetG, PetL, PetM and PetN. The complex functions as a dimer.

It is found in the plastid. The protein localises to the chloroplast thylakoid membrane. Functionally, component of the cytochrome b6-f complex, which mediates electron transfer between photosystem II (PSII) and photosystem I (PSI), cyclic electron flow around PSI, and state transitions. PetL is important for photoautotrophic growth as well as for electron transfer efficiency and stability of the cytochrome b6-f complex. This is Cytochrome b6-f complex subunit 6 from Oenothera elata subsp. hookeri (Hooker's evening primrose).